The following is a 90-amino-acid chain: Protein RL8A (90 aa).

A helical transmembrane segment spans residues 15 to 34 (WTCEGLLLLLGLLVLFFHHH). Positions 55-90 (HESGWYSSDDDGDRDGDEETGESHNRNSVGLSAVFS) are disordered. Acidic residues predominate over residues 62–74 (SDDDGDRDGDEET). A compositionally biased stretch (polar residues) spans 80–90 (RNSVGLSAVFS).

It localises to the host membrane. The polypeptide is Protein RL8A (RL8A) (Homo sapiens (Human)).